Reading from the N-terminus, the 305-residue chain is MAREDSVKCLRCLLYALNLLFWLMSISVLAVSAWMRDYLNNVLTLTAETRVEEAVILTYFPVVHPVMIAVCCFLIIVGMLGYCGTVKRNLLLLAWYFGTLLVIFCVELACGVWTYEQEVMVPVQWSDMVTLKARMTNYGLPRYRWLTHAWNYFQREFKCCGVVYFTDWLEMTEMDWPPDSCCVREFPGCSKQAHQEDLSDLYQEGCGKKMYSFLRGTKQLQVLRFLGISIGVTQILAMILTITLLWALYYDRREPGTDQMLSLKNDTSQHLSCHSVELLKPSLSRIFEHTSMANSFNTHFEMEEL.

The Cytoplasmic segment spans residues 1 to 12 (MAREDSVKCLRC). Residues Cys9 and Cys12 are each lipidated (S-palmitoyl cysteine). A helical transmembrane segment spans residues 13–33 (LLYALNLLFWLMSISVLAVSA). Residues 34 to 59 (WMRDYLNNVLTLTAETRVEEAVILTY) are Extracellular-facing. A helical transmembrane segment spans residues 60–80 (FPVVHPVMIAVCCFLIIVGML). At 81–89 (GYCGTVKRN) the chain is on the cytoplasmic side. Residue Cys83 is the site of S-palmitoyl cysteine attachment. A helical membrane pass occupies residues 90 to 110 (LLLLAWYFGTLLVIFCVELAC). The Extracellular segment spans residues 111-224 (GVWTYEQEVM…RGTKQLQVLR (114 aa)). Residues 225-245 (FLGISIGVTQILAMILTITLL) form a helical membrane-spanning segment. Over 246-305 (WALYYDRREPGTDQMLSLKNDTSQHLSCHSVELLKPSLSRIFEHTSMANSFNTHFEMEEL) the chain is Cytoplasmic.

It belongs to the tetraspanin (TM4SF) family. As to quaternary structure, interacts (when palmitoylated) with ADAM10. Interacts with MMP14/MT1-MMP. Component of a complex, at least composed of TSPAN12, FZD4 and norrin (NDP). Palmitoylated; required for interaction with ADAM10. Expressed in the neonatal retinal vasculature but not other retinal tissues. Also detected in the neonatal meningeal vasculature and in nonvascular cell types, such as the smooth muscle cells in the neonatal intestine.

The protein resides in the cell membrane. Its function is as follows. Regulator of cell surface receptor signal transduction. Acts as a regulator of membrane proteinases such as ADAM10 and MMP14/MT1-MMP. Activates ADAM10-dependent cleavage activity of amyloid precursor protein (APP). Activates MMP14/MT1-MMP-dependent cleavage activity. Plays a central role in retinal vascularization by regulating norrin (NDP) signal transduction. Acts in concert with norrin (NDP) to promote FZD4 multimerization and subsequent activation of FZD4, leading to promote accumulation of beta-catenin (CTNNB1) and stimulate LEF/TCF-mediated transcriptional programs. Suprisingly, it only activate the norrin (NDP)-dependent activation of FZD4, while it does not activate the Wnt-dependent activation of FZD4, suggesting the existence of a Wnt-independent signaling that also promote accumulation the beta-catenin (CTNNB1). In Mus musculus (Mouse), this protein is Tetraspanin-12 (Tspan12).